The following is an 869-amino-acid chain: MNSSEIREKFLKFFESKGHTIVASSPLVPGNDPTLMFTNSGMVQFKDVFLGEDKRPYTRATSVQACLRAGGKHNDLENVGYTARHHTFFEMLGNWSFGDYFKRDALKWSWELLTQVYGLPAEKLLATVYIEDDEAFDIWTKEIGLPPERVIRIGDNKGGRYKSDNFWMMADTGPCGPCSEIFYDHGPHIAGGPPGSPDEDGDRFIEIWNNVFMQFDMAEDGSVKPLPAPCVDTGMGLERLAAILQHVHSNYEIDTFEALIKAAGRETNTKDLSNNSLKVIADHIRATAFLVADGVIPSNEGRGYVQRRIIRRAIRHGYKLGQKKPFFHKLVKDLVEQMGEAYPKLKADAQRITDVLKAEEERFFETLANGMEILDAALAGDAKVLPGEVAFKLHDTFGFPLDLSADVCRERGLSVDEAGFAAAMEKQKAAGRAAGKFKMERAVEYTGAGNTFTGYEHLEEQATVVGLYFEGTAVPSLKEGQAGIVVLDTTPFYSESGGQVGDQGFISAEGVQFGVEDTQKIKADVYGHHGVQTQGTLTVGDKVKAAVDGARRAATMRNHSVTHIMHKALREVLGDHVQQKGSLVDPDKTRFDFAHNAPVTREQILEIEKRVNAEILLNSDTQARVMDIESAQKTGALMLFGEKYGETVRVLDIGSSRELCGGTHVSRTGDIGLFKVMSESGVAAGVRRIEAITGAKALGYVQDLEAVIHSAAAMMKTQPAELEPRLAQVLDQMKALEREVGALKGKLASSQGDELLAQAVDVKGIKVLAAVLEGADVATLRNTMDKLKDKLKTAAIVLAAVNDGKVSLIAGVTADSIAKVKAGDLVNFVAQQVGGKGGGKPDMAQAGGTDASGLPTALQGVAAWVGERA.

4 residues coordinate Zn(2+): His559, His563, Cys660, and His664.

Belongs to the class-II aminoacyl-tRNA synthetase family. Requires Zn(2+) as cofactor.

The protein localises to the cytoplasm. The enzyme catalyses tRNA(Ala) + L-alanine + ATP = L-alanyl-tRNA(Ala) + AMP + diphosphate. In terms of biological role, catalyzes the attachment of alanine to tRNA(Ala) in a two-step reaction: alanine is first activated by ATP to form Ala-AMP and then transferred to the acceptor end of tRNA(Ala). Also edits incorrectly charged Ser-tRNA(Ala) and Gly-tRNA(Ala) via its editing domain. This chain is Alanine--tRNA ligase, found in Janthinobacterium sp. (strain Marseille) (Minibacterium massiliensis).